We begin with the raw amino-acid sequence, 248 residues long: Anamorsin homolog (248 aa).

Residues 4-130 form an N-terminal SAM-like domain region; the sequence is FKGLQKSLYI…ETGSSARLSF (127 aa). Positions 131-161 are linker; sequence AKKSPSMNVWKISGDDEELIDEEELLDEEDK. 4 residues coordinate [2Fe-2S] cluster: Cys-172, Cys-181, Cys-184, and Cys-186. Positions 172-186 are fe-S binding site A; that stretch reads CSTTGKRKACKNCSC. Residues Cys-209, Cys-212, Cys-220, and Cys-223 each contribute to the [4Fe-4S] cluster site. 2 consecutive short sequence motifs (cx2C motif) follow at residues 209 to 212 and 220 to 223; these read CGNC and CSTC. Residues 209-223 are fe-S binding site B; sequence CGNCYLGDAFRCSTC.

This sequence belongs to the anamorsin family. In terms of assembly, monomer. It depends on [2Fe-2S] cluster as a cofactor. [4Fe-4S] cluster is required as a cofactor.

The protein resides in the cytoplasm. It localises to the mitochondrion intermembrane space. Component of the cytosolic iron-sulfur (Fe-S) protein assembly (CIA) machinery. Required for the maturation of extramitochondrial Fe-S proteins. Part of an electron transfer chain functioning in an early step of cytosolic Fe-S biogenesis, facilitating the de novo assembly of a [4Fe-4S] cluster on the cytosolic Fe-S scaffold complex. Electrons are transferred from NADPH via a FAD- and FMN-containing diflavin oxidoreductase. Together with the diflavin oxidoreductase, also required for the assembly of the diferric tyrosyl radical cofactor of ribonucleotide reductase (RNR), probably by providing electrons for reduction during radical cofactor maturation in the catalytic small subunit. This Drosophila mojavensis (Fruit fly) protein is Anamorsin homolog.